Here is a 929-residue protein sequence, read N- to C-terminus: Isoleucine--tRNA ligase (929 aa).

A 'HIGH' region motif is present at residues 58-68 (PYANGDIHIGH). L-isoleucyl-5'-AMP is bound at residue glutamate 563. The 'KMSKS' region motif lies at 605-609 (KMSKS). Residue lysine 608 coordinates ATP. Zn(2+)-binding residues include cysteine 892, cysteine 895, cysteine 912, and cysteine 915.

This sequence belongs to the class-I aminoacyl-tRNA synthetase family. IleS type 1 subfamily. Monomer. It depends on Zn(2+) as a cofactor.

The protein localises to the cytoplasm. It carries out the reaction tRNA(Ile) + L-isoleucine + ATP = L-isoleucyl-tRNA(Ile) + AMP + diphosphate. Functionally, catalyzes the attachment of isoleucine to tRNA(Ile). As IleRS can inadvertently accommodate and process structurally similar amino acids such as valine, to avoid such errors it has two additional distinct tRNA(Ile)-dependent editing activities. One activity is designated as 'pretransfer' editing and involves the hydrolysis of activated Val-AMP. The other activity is designated 'posttransfer' editing and involves deacylation of mischarged Val-tRNA(Ile). The sequence is that of Isoleucine--tRNA ligase from Neisseria meningitidis serogroup C / serotype 2a (strain ATCC 700532 / DSM 15464 / FAM18).